Here is a 416-residue protein sequence, read N- to C-terminus: Formyl-CoA:oxalate CoA-transferase (416 aa).

CoA contacts are provided by residues 17-18 (QS), Arg38, 72-75 (LNTK), 96-98 (NFH), His104, and 137-140 (KAYE). Asp169 serves as the catalytic Nucleophile. Position 248-250 (248-250 (GGQ)) interacts with substrate. 273-275 (QEQ) contacts CoA.

This sequence belongs to the CoA-transferase III family. Frc subfamily. Homodimer.

It carries out the reaction formyl-CoA + oxalate = oxalyl-CoA + formate. Its pathway is metabolic intermediate degradation; oxalate degradation; CO(2) and formate from oxalate: step 1/2. In terms of biological role, involved in the catabolism of oxalate and in the adapatation to low pH via the induction of the oxalate-dependent acid tolerance response (ATR). Catalyzes the transfer of the CoA moiety from formyl-CoA to oxalate. The sequence is that of Formyl-CoA:oxalate CoA-transferase from Shigella sonnei (strain Ss046).